A 1025-amino-acid chain; its full sequence is Error-prone DNA polymerase (1025 aa).

This sequence belongs to the DNA polymerase type-C family. DnaE2 subfamily.

The protein localises to the cytoplasm. The catalysed reaction is DNA(n) + a 2'-deoxyribonucleoside 5'-triphosphate = DNA(n+1) + diphosphate. Its function is as follows. DNA polymerase involved in damage-induced mutagenesis and translesion synthesis (TLS). It is not the major replicative DNA polymerase. The sequence is that of Error-prone DNA polymerase from Pseudomonas fluorescens (strain Pf0-1).